We begin with the raw amino-acid sequence, 460 residues long: Fumarate hydratase class II (460 aa).

Substrate contacts are provided by residues 95 to 97, 126 to 129, 136 to 138, and T184; these read SGT, HPND, and SSN. The Proton donor/acceptor role is filled by H185. S315 is a catalytic residue. Residues S316 and 321 to 323 contribute to the substrate site; that span reads KIN.

This sequence belongs to the class-II fumarase/aspartase family. Fumarase subfamily. As to quaternary structure, homotetramer.

It is found in the cytoplasm. The enzyme catalyses (S)-malate = fumarate + H2O. It participates in carbohydrate metabolism; tricarboxylic acid cycle; (S)-malate from fumarate: step 1/1. Functionally, involved in the TCA cycle. Catalyzes the stereospecific interconversion of fumarate to L-malate. In Chlamydia caviae (strain ATCC VR-813 / DSM 19441 / 03DC25 / GPIC) (Chlamydophila caviae), this protein is Fumarate hydratase class II.